The sequence spans 406 residues: Vitamin D3 dihydroxylase (406 aa).

A compositionally biased stretch (low complexity) spans 1–15 (MTDTATTPQTTDAPA). Residues 1 to 24 (MTDTATTPQTTDAPAFPSNRSCPY) are disordered. Thr-81 is a binding site for calciol. 2 residues coordinate heme: His-103 and Arg-107. Arg-193, Ser-236, and Ile-293 together coordinate calciol. Heme is bound by residues Arg-297, His-353, and Cys-355.

The protein belongs to the cytochrome P450 family. The cofactor is heme.

Its subcellular location is the cytoplasm. It catalyses the reaction calciol + 2 reduced [2Fe-2S]-[ferredoxin] + O2 + 2 H(+) = calcidiol + 2 oxidized [2Fe-2S]-[ferredoxin] + H2O. The enzyme catalyses calcidiol + 2 reduced [2Fe-2S]-[ferredoxin] + O2 + 2 H(+) = calcitriol + 2 oxidized [2Fe-2S]-[ferredoxin] + H2O. In terms of biological role, involved in the metabolism of vitamin D3 (calciol) and of a number of sulfonylurea herbicides. Catalyzes the two-step hydroxylation (25- and 1-alpha-hydroxylation) of vitamin D3 (VD3) to yield its active form 1-alpha,25-dihydroxyvitamin D3 (calcitriol). The first step is the hydroxylation of the C-25 position of VD3 to produce 25-hydroxyvitamin D3 (calcidiol). The second reaction is the hydroxylation of the C1-alpha-position of calcidiol to produce calcitriol. It can also hydroxylate vitamin D2. This Streptomyces griseolus protein is Vitamin D3 dihydroxylase.